Reading from the N-terminus, the 575-residue chain is Delta-1-pyrroline-5-carboxylate dehydrogenase, mitochondrial (575 aa).

297-302 (GKIQSG) provides a ligand contact to NAD(+). Catalysis depends on E317, which acts as the Proton acceptor. C351 serves as the catalytic Nucleophile.

Belongs to the aldehyde dehydrogenase family.

It is found in the mitochondrion inner membrane. The catalysed reaction is L-glutamate 5-semialdehyde + NAD(+) + H2O = L-glutamate + NADH + 2 H(+). It functions in the pathway amino-acid degradation; L-proline degradation into L-glutamate; L-glutamate from L-proline: step 2/2. The polypeptide is Delta-1-pyrroline-5-carboxylate dehydrogenase, mitochondrial (PUT2) (Saccharomyces cerevisiae (strain ATCC 204508 / S288c) (Baker's yeast)).